The primary structure comprises 425 residues: ATP-dependent RNA helicase eIF4A (425 aa).

The Q motif motif lies at 38 to 66 (DTWEDYGLKEDLLKGIYSIGFETPSFIQK). In terms of domain architecture, Helicase ATP-binding spans 69 to 241 (IQPIIDGRDI…EEILINPVII (173 aa)). 82–89 (AQSGTGKT) contacts ATP. The DEAD box motif lies at 187 to 190 (DEAD). Positions 252 to 425 (GIRQYFIDLR…KELPADFSFQ (174 aa)) constitute a Helicase C-terminal domain.

It belongs to the DEAD box helicase family. eIF4A subfamily. Component of the eIF4F complex, which composition varies with external and internal environmental conditions. It is composed of at least eIF4A, eIF4E and eIF4G.

It localises to the cytoplasm. The catalysed reaction is ATP + H2O = ADP + phosphate + H(+). ATP-dependent RNA helicase which is a subunit of the eIF4F complex involved in cap recognition and is required for mRNA binding to ribosome. In the current model of translation initiation, eIF4A unwinds RNA secondary structures in the 5'-UTR of mRNAs which is necessary to allow efficient binding of the small ribosomal subunit, and subsequent scanning for the initiator codon. The protein is ATP-dependent RNA helicase eIF4A (TIF1) of Encephalitozoon cuniculi (strain GB-M1) (Microsporidian parasite).